The chain runs to 123 residues: Galanin peptides (123 aa).

The N-terminal stretch at 1–19 (MPRGSVLLLASLLLAAALS) is a signal peptide. The propeptide occupies 20-30 (ATLGLGSPVKE). Residues 53-66 (SFQDKHGLAGKREL) show a composition bias toward basic and acidic residues. A disordered region spans residues 53–79 (SFQDKHGLAGKRELEPEDEARPGSFDR). Alanine amide is present on alanine 61. Serine 116 carries the phosphoserine modification.

It belongs to the galanin family.

It localises to the secreted. In terms of biological role, endocrine hormone of the central and peripheral nervous systems that binds and activates the G protein-coupled receptors GALR1, GALR2, and GALR3. This small neuropeptide may regulate diverse physiologic functions including contraction of smooth muscle of the gastrointestinal and genitourinary tract, growth hormone and insulin release and adrenal secretion. The protein is Galanin peptides (GAL) of Bos taurus (Bovine).